The sequence spans 347 residues: UDP-3-O-acylglucosamine N-acyltransferase 1 (347 aa).

Residue histidine 246 is the Proton acceptor of the active site.

Belongs to the transferase hexapeptide repeat family. LpxD subfamily. In terms of assembly, homotrimer.

The catalysed reaction is a UDP-3-O-[(3R)-3-hydroxyacyl]-alpha-D-glucosamine + a (3R)-hydroxyacyl-[ACP] = a UDP-2-N,3-O-bis[(3R)-3-hydroxyacyl]-alpha-D-glucosamine + holo-[ACP] + H(+). Its pathway is bacterial outer membrane biogenesis; LPS lipid A biosynthesis. Its function is as follows. Catalyzes the N-acylation of UDP-3-O-acylglucosamine using 3-hydroxyacyl-ACP as the acyl donor. Is involved in the biosynthesis of lipid A, a phosphorylated glycolipid that anchors the lipopolysaccharide to the outer membrane of the cell. This is UDP-3-O-acylglucosamine N-acyltransferase 1 from Francisella tularensis subsp. tularensis (strain SCHU S4 / Schu 4).